An 863-amino-acid polypeptide reads, in one-letter code: DNA-directed RNA polymerase subunit beta' (863 aa).

Positions 1-83 are disordered; that stretch reads MSGEVAQDQP…SKKKETKASQ (83 aa). The segment covering 23-36 has biased composition (polar residues); the sequence is EIVNSAITVQSSAK. 4 residues coordinate Zn(2+): Cys-159, Cys-161, Cys-180, and Cys-183. Mg(2+) is bound by residues Asp-621, Asp-623, and Asp-625.

This sequence belongs to the RNA polymerase beta' chain family. RpoC1 subfamily. As to quaternary structure, in plastids the minimal PEP RNA polymerase catalytic core is composed of four subunits: alpha, beta, beta', and beta''. When a (nuclear-encoded) sigma factor is associated with the core the holoenzyme is formed, which can initiate transcription. Mg(2+) serves as cofactor. Zn(2+) is required as a cofactor.

Its subcellular location is the plastid. The protein resides in the chloroplast. It carries out the reaction RNA(n) + a ribonucleoside 5'-triphosphate = RNA(n+1) + diphosphate. Its function is as follows. DNA-dependent RNA polymerase catalyzes the transcription of DNA into RNA using the four ribonucleoside triphosphates as substrates. The sequence is that of DNA-directed RNA polymerase subunit beta' from Nephroselmis olivacea (Green alga).